Consider the following 46-residue polypeptide: Defensin-like protein 2 (46 aa).

4 cysteine pairs are disulfide-bonded: C3–C46, C13–C33, C19–C40, and C23–C42.

Monomer. In terms of tissue distribution, present in seeds, cotyledons and leaves. Not found in roots or stems.

Its function is as follows. Has antibacterial activity against the Gram-positive bacterium S.aureus and the Gram-negative bacteria E.coli and P.syringae. Does not have antibacterial activity against the phytopathogenic bacteria R.solanacearum, Rhataybacter sp and Erwinia sp. Does not inhibit trypsin, chymotrypsin or alpha-amylases. The polypeptide is Defensin-like protein 2 (Vigna unguiculata (Cowpea)).